A 485-amino-acid chain; its full sequence is NADH-quinone oxidoreductase subunit N (485 aa).

Helical transmembrane passes span 3–23, 30–50, 67–87, 96–116, 120–140, 154–174, 202–222, 247–267, 271–291, 299–319, 332–352, 375–395, 411–431, and 453–473; these read LFMPEIIILITALLVIITDLF, HLAYLSLLGLGAAAVATVLNW, YASFFRILFISLSGLVIMASV, FQGEYYALVLLALLGMIMMAS, LITMYLSLELAGLAFYVLVGF, LLLGGVASAMLVFGLVLIYGF, FILGIILTITGLGFKVAAVPF, AAGFALFLRLFYTVFTDPLAL, WALIVAVLATAGMTLGNVLAI, MLGYSSIAHAGYILVALAAVG, LFYLVAFAVSDLVAFVSIIAI, ASALTLALLSLTGFPPLAGFL, WLMIVAAVNTVISAVFYFNVI, and LALGISGLAVLIFGIIPETLL.

The protein belongs to the complex I subunit 2 family. NDH-1 is composed of 14 different subunits. Subunits NuoA, H, J, K, L, M, N constitute the membrane sector of the complex.

It localises to the cell membrane. The enzyme catalyses a quinone + NADH + 5 H(+)(in) = a quinol + NAD(+) + 4 H(+)(out). NDH-1 shuttles electrons from NADH, via FMN and iron-sulfur (Fe-S) centers, to quinones in the respiratory chain. The immediate electron acceptor for the enzyme in this species is believed to be ubiquinone. Couples the redox reaction to proton translocation (for every two electrons transferred, four hydrogen ions are translocated across the cytoplasmic membrane), and thus conserves the redox energy in a proton gradient. This Dehalococcoides mccartyi (strain ATCC BAA-2100 / JCM 16839 / KCTC 5957 / BAV1) protein is NADH-quinone oxidoreductase subunit N.